The chain runs to 130 residues: Histone H2A type 1-F (130 aa).

The interval 1–22 (MSGRGKQGGKARAKAKTRSSRA) is disordered. Position 2 is a phosphoserine; by RPS6KA5 (S2). R4 is subject to Citrulline; alternate. Symmetric dimethylarginine; by PRMT5; alternate is present on R4. 2 positions are modified to N6-(2-hydroxyisobutyryl)lysine: K6 and K10. The segment covering 7–19 (QGGKARAKAKTRS) has biased composition (basic residues). Residue K10 is modified to N6-lactoyllysine; alternate. K37 is subject to N6-(2-hydroxyisobutyryl)lysine; alternate. K37 bears the N6-(beta-hydroxybutyryl)lysine; alternate mark. Residue K37 is modified to N6-crotonyllysine; alternate. Residues K75, K76, and K96 each carry the N6-(2-hydroxyisobutyryl)lysine modification. K96 bears the N6-glutaryllysine; alternate mark. The residue at position 105 (Q105) is an N5-methylglutamine. Position 119 is an N6-(2-hydroxyisobutyryl)lysine; alternate (K119). 2 positions are modified to N6-crotonyllysine; alternate: K119 and K120. Residues K119 and K120 each carry the N6-glutaryllysine; alternate modification. K120 participates in a covalent cross-link: Glycyl lysine isopeptide (Lys-Gly) (interchain with G-Cter in ubiquitin); alternate. Phosphothreonine; by DCAF1 is present on T121. N6-crotonyllysine; alternate is present on K126. The residue at position 126 (K126) is an N6-glutaryllysine; alternate.

This sequence belongs to the histone H2A family. In terms of assembly, the nucleosome is a histone octamer containing two molecules each of H2A, H2B, H3 and H4 assembled in one H3-H4 heterotetramer and two H2A-H2B heterodimers. The octamer wraps approximately 147 bp of DNA. Deiminated on Arg-4 in granulocytes upon calcium entry. Post-translationally, monoubiquitination of Lys-120 (H2AK119Ub) by RING1, TRIM37 and RNF2/RING2 complex gives a specific tag for epigenetic transcriptional repression and participates in X chromosome inactivation of female mammals. It is involved in the initiation of both imprinted and random X inactivation. Ubiquitinated H2A is enriched in inactive X chromosome chromatin. Ubiquitination of H2A functions downstream of methylation of 'Lys-27' of histone H3 (H3K27me). H2AK119Ub by RNF2/RING2 can also be induced by ultraviolet and may be involved in DNA repair. Following DNA double-strand breaks (DSBs), it is ubiquitinated through 'Lys-63' linkage of ubiquitin moieties by the E2 ligase UBE2N and the E3 ligases RNF8 and RNF168, leading to the recruitment of repair proteins to sites of DNA damage. Ubiquitination at Lys-14 and Lys-16 (H2AK13Ub and H2AK15Ub, respectively) in response to DNA damage is initiated by RNF168 that mediates monoubiquitination at these 2 sites, and 'Lys-63'-linked ubiquitin are then conjugated to monoubiquitin; RNF8 is able to extend 'Lys-63'-linked ubiquitin chains in vitro. H2AK119Ub and ionizing radiation-induced 'Lys-63'-linked ubiquitination (H2AK13Ub and H2AK15Ub) are distinct events. In terms of processing, phosphorylation on Ser-2 (H2AS1ph) is enhanced during mitosis. Phosphorylation on Ser-2 by RPS6KA5/MSK1 directly represses transcription. Acetylation of H3 inhibits Ser-2 phosphorylation by RPS6KA5/MSK1. Phosphorylation at Thr-121 (H2AT120ph) by DCAF1 is present in the regulatory region of many tumor suppresor genes and down-regulates their transcription. Symmetric dimethylation on Arg-4 by the PRDM1/PRMT5 complex may play a crucial role in the germ-cell lineage. Post-translationally, glutamine methylation at Gln-105 (H2AQ104me) by FBL is specifically dedicated to polymerase I. It is present at 35S ribosomal DNA locus and impairs binding of the FACT complex. In terms of processing, crotonylation (Kcr) is specifically present in male germ cells and marks testis-specific genes in post-meiotic cells, including X-linked genes that escape sex chromosome inactivation in haploid cells. Crotonylation marks active promoters and enhancers and confers resistance to transcriptional repressors. It is also associated with post-meiotically activated genes on autosomes. Lactylated in macrophages by EP300/P300 by using lactoyl-CoA directly derived from endogenous or exogenous lactate, leading to stimulates gene transcription.

Its subcellular location is the nucleus. The protein resides in the chromosome. Its function is as follows. Core component of nucleosome. Nucleosomes wrap and compact DNA into chromatin, limiting DNA accessibility to the cellular machineries which require DNA as a template. Histones thereby play a central role in transcription regulation, DNA repair, DNA replication and chromosomal stability. DNA accessibility is regulated via a complex set of post-translational modifications of histones, also called histone code, and nucleosome remodeling. The protein is Histone H2A type 1-F of Rattus norvegicus (Rat).